Reading from the N-terminus, the 159-residue chain is MADDARQKHRLQSVELDEESLAAVSRDQEQERQIAIFDLLEDNYFAPEGAEHGPYDLRMGLVENRLVLDVRGPGYERRHILSLSPFRGLIRDYFMICESYYQAIRNSTPAQIEALDMGRRGLHNEASELLQTRLKGKIETDLDTARRLFTLICALHWRG.

This sequence belongs to the UPF0262 family.

The sequence is that of UPF0262 protein PHZ_c2197 from Phenylobacterium zucineum (strain HLK1).